The primary structure comprises 119 residues: Large ribosomal subunit protein uL24 (119 aa).

This sequence belongs to the universal ribosomal protein uL24 family. In terms of assembly, part of the 50S ribosomal subunit.

Functionally, one of two assembly initiator proteins, it binds directly to the 5'-end of the 23S rRNA, where it nucleates assembly of the 50S subunit. One of the proteins that surrounds the polypeptide exit tunnel on the outside of the subunit. The polypeptide is Large ribosomal subunit protein uL24 (Leifsonia xyli subsp. xyli (strain CTCB07)).